A 168-amino-acid chain; its full sequence is T-cell surface glycoprotein CD3 delta chain (168 aa).

An N-terminal signal peptide occupies residues 1-21 (MEHSRFLSCLILAALLSQVNP). The Extracellular segment spans residues 22 to 102 (RILKVLEPED…CVELDTATLA (81 aa)). The cysteines at positions 37 and 74 are disulfide-linked. N-linked (GlcNAc...) asparagine glycosylation is found at asparagine 38 and asparagine 56. The helical transmembrane segment at 103–123 (GMIITDIIATVLLALGVYCFA) threads the bilayer. The Cytoplasmic segment spans residues 124–168 (GHETGRFSRAADTQALMGNDQLYQPLRERNDAQYSRLGDKWARNK). An ITAM domain is found at 135–163 (DTQALMGNDQLYQPLRERNDAQYSRLGDK). Phosphotyrosine is present on residues tyrosine 146 and tyrosine 157.

The TCR-CD3 complex is composed of a CD3D/CD3E and a CD3G/CD3E heterodimers that preferentially associate with TCRalpha and TCRbeta, respectively, to form TCRalpha/CD3E/CD3G and TCRbeta/CD3G/CD3E trimers. In turn, the hexamer interacts with CD3Z homodimer to form the TCR-CD3 complex. Alternatively, TCRalpha and TCRbeta can be replaced by TCRgamma and TCRdelta. Interacts with coreceptors CD4 and CD8. Phosphorylated on Tyr residues after T-cell receptor triggering by LCK in association with CD4/CD8. In terms of tissue distribution, CD3D is mostly present on T-lymphocytes with its TCR-CD3 partners. Present also in fetal NK-cells.

The protein localises to the cell membrane. In terms of biological role, part of the TCR-CD3 complex present on T-lymphocyte cell surface that plays an essential role in adaptive immune response. When antigen presenting cells (APCs) activate T-cell receptor (TCR), TCR-mediated signals are transmitted across the cell membrane by the CD3 chains CD3D, CD3E, CD3G and CD3Z. All CD3 chains contain immunoreceptor tyrosine-based activation motifs (ITAMs) in their cytoplasmic domain. Upon TCR engagement, these motifs become phosphorylated by Src family protein tyrosine kinases LCK and FYN, resulting in the activation of downstream signaling pathways. In addition of this role of signal transduction in T-cell activation, CD3D plays an essential role in thymocyte differentiation. Indeed, participates in correct intracellular TCR-CD3 complex assembly and surface expression. In absence of a functional TCR-CD3 complex, thymocytes are unable to differentiate properly. Interacts with CD4 and CD8 and thus serves to establish a functional link between the TCR and coreceptors CD4 and CD8, which is needed for activation and positive selection of CD4 or CD8 T-cells. The protein is T-cell surface glycoprotein CD3 delta chain (CD3D) of Bos taurus (Bovine).